Consider the following 267-residue polypeptide: uncharacterized protein (267 aa).

The disordered stretch occupies residues 1 to 55 (MTEERKETFEEEINQSERIDADEEPLSRMSRKASRQSKQKQKQKQKPRQERGEST). Residues 9-24 (FEEEINQSERIDADEE) show a composition bias toward acidic residues. Residues 29 to 46 (MSRKASRQSKQKQKQKQK) are compositionally biased toward basic residues. Helical transmembrane passes span 93 to 115 (YKYG…WFQL), 135 to 157 (GFLV…IWAV), 173 to 195 (AVLG…FAIV), 199 to 221 (MLTV…LYVQ), and 234 to 256 (YIYC…WPFI).

The protein localises to the cell membrane. This is an uncharacterized protein from Bacillus subtilis (strain 168).